The following is a 589-amino-acid chain: Intermediate filament protein B (589 aa).

A head region spans residues 1-84 (SLKQSQESSE…LEATDKEKKE (84 aa)). One can recognise an IF rod domain in the interval 81-433 (EKKEMQGLND…KMLEGEESRV (353 aa)). Residues 85–116 (MQGLNDRLGNYIDRVKKLEEQNRKLVADLDEL) form a coil 1A region. The interval 117 to 130 (RGRWGKDTSEIKIQ) is linker 1. The coil 1B stretch occupies residues 131–268 (YSDSLRDARK…RVHEQEVKEL (138 aa)). Positions 269–285 (QALLAQAPADTREFFKN) are linker 12. Residues 286–433 (ELALAIRDIK…KMLEGEESRV (148 aa)) are coil 2. The interval 434–589 (GLRQMVEQVV…HTQKTIQTGQ (156 aa)) is tail. Positions 446-470 (HSLQQQEDTDSTRNVRGEVSTKTTF) are disordered. Positions 466–584 (TKTTFQRSAK…DERATHTQKT (119 aa)) constitute an LTD domain.

Belongs to the intermediate filament family. As to quaternary structure, a and B can form homopolymers. In terms of tissue distribution, giant body muscle cells.

It is found in the cytoplasm. The polypeptide is Intermediate filament protein B (Ascaris suum (Pig roundworm)).